A 294-amino-acid chain; its full sequence is Secreted frizzled-related protein 2 (294 aa).

Positions 1–24 are cleaved as a signal peptide; the sequence is MPRGPGSLLLLVLASHCCLGSARG. Positions 34–154 constitute an FZ domain; that stretch reads YKRSNCKPIP…PQDNDLCIPL (121 aa). 8 disulfide bridges follow: Cys39–Cys102, Cys49–Cys95, Cys86–Cys124, Cys113–Cys151, Cys117–Cys141, Cys171–Cys244, Cys174–Cys246, and Cys189–Cys294. Positions 171–294 constitute an NTR domain; sequence CEACKNKNED…ISRSIRKLQC (124 aa).

Belongs to the secreted frizzled-related protein (sFRP) family.

The protein localises to the secreted. Soluble frizzled-related proteins (sFRPS) function as modulators of Wnt signaling through direct interaction with Wnts. They have a role in regulating cell growth and differentiation in specific cell types. SFRP2 may be important for eye retinal development and for myogenesis. This Canis lupus familiaris (Dog) protein is Secreted frizzled-related protein 2 (SFRP2).